The primary structure comprises 250 residues: Ubiquinone/menaquinone biosynthesis C-methyltransferase UbiE (250 aa).

S-adenosyl-L-methionine is bound by residues Thr73, Asp94, 122–123 (NA), and Ser139.

This sequence belongs to the class I-like SAM-binding methyltransferase superfamily. MenG/UbiE family.

It catalyses the reaction a 2-demethylmenaquinol + S-adenosyl-L-methionine = a menaquinol + S-adenosyl-L-homocysteine + H(+). The catalysed reaction is a 2-methoxy-6-(all-trans-polyprenyl)benzene-1,4-diol + S-adenosyl-L-methionine = a 5-methoxy-2-methyl-3-(all-trans-polyprenyl)benzene-1,4-diol + S-adenosyl-L-homocysteine + H(+). Its pathway is quinol/quinone metabolism; menaquinone biosynthesis; menaquinol from 1,4-dihydroxy-2-naphthoate: step 2/2. It functions in the pathway cofactor biosynthesis; ubiquinone biosynthesis. Methyltransferase required for the conversion of demethylmenaquinol (DMKH2) to menaquinol (MKH2) and the conversion of 2-polyprenyl-6-methoxy-1,4-benzoquinol (DDMQH2) to 2-polyprenyl-3-methyl-6-methoxy-1,4-benzoquinol (DMQH2). This chain is Ubiquinone/menaquinone biosynthesis C-methyltransferase UbiE, found in Francisella tularensis subsp. mediasiatica (strain FSC147).